Reading from the N-terminus, the 303-residue chain is uncharacterized protein (303 aa).

Disordered stretches follow at residues 1 to 89 (MTSP…NVRS) and 132 to 159 (SELP…STPR). Positions 61-89 (RASQSGYRPSDPLTTTRQSNPAPGANVRS) are enriched in polar residues. 2 consecutive transmembrane segments (helical) span residues 205–225 (LLLS…LYLL) and 264–284 (VLVG…AAFV).

To M.tuberculosis Rv0007.

Its subcellular location is the cell membrane. This is an uncharacterized protein from Mycobacterium leprae (strain TN).